Reading from the N-terminus, the 45-residue chain is Large ribosomal subunit protein bL34 (45 aa).

Residues 1 to 10 (MTQRTLGGTN) are compositionally biased toward polar residues. Residues 1 to 45 (MTQRTLGGTNRKQKRTSGFRARMRTHNGRKVIQARRSKGRHRLAV) are disordered. Positions 11–45 (RKQKRTSGFRARMRTHNGRKVIQARRSKGRHRLAV) are enriched in basic residues.

This sequence belongs to the bacterial ribosomal protein bL34 family.

The protein is Large ribosomal subunit protein bL34 (rpmH) of Synechocystis sp. (strain ATCC 27184 / PCC 6803 / Kazusa).